The following is a 489-amino-acid chain: Zeta-carotene desaturase (489 aa).

The protein belongs to the zeta carotene desaturase family. Requires NAD(+) as cofactor. The cofactor is NADP(+). It depends on FAD as a cofactor.

It carries out the reaction 9,9'-di-cis-zeta-carotene + 2 a quinone = 7,7',9,9'-tetra-cis-lycopene + 2 a quinol. It participates in carotenoid biosynthesis; lycopene biosynthesis. Functionally, catalyzes the conversion of zeta-carotene to lycopene via the intermediary of neurosporene. It carries out two consecutive desaturations (introduction of double bonds) at positions C-7 and C-7'. This is Zeta-carotene desaturase (crtQ) from Synechocystis sp. (strain ATCC 27184 / PCC 6803 / Kazusa).